The sequence spans 515 residues: Endoglucanase 2 (515 aa).

Positions 1–31 are cleaved as a signal peptide; that stretch reads MVAKPRSRCCCCSVFIGVIILIAIIIAVIFT. N-linked (GlcNAc...) asparagine glycosylation occurs at asparagine 37. Aspartate 100 serves as the catalytic Nucleophile. An N-linked (GlcNAc...) asparagine glycan is attached at asparagine 250. Histidine 433 is a catalytic residue. Asparagine 475 carries N-linked (GlcNAc...) asparagine glycosylation. Aspartate 480 is a catalytic residue. Asparagine 483 is a glycosylation site (N-linked (GlcNAc...) asparagine). Glutamate 489 is a catalytic residue.

It belongs to the glycosyl hydrolase 9 (cellulase E) family.

The protein localises to the secreted. It carries out the reaction Endohydrolysis of (1-&gt;4)-beta-D-glucosidic linkages in cellulose, lichenin and cereal beta-D-glucans.. The sequence is that of Endoglucanase 2 from Arabidopsis thaliana (Mouse-ear cress).